Consider the following 602-residue polypeptide: MTDISVSKIRNFCIIAHIDHGKSTLADRLLQDTGTVKQRDMQDQFLDSMDLERERGITIKLQAARMKYKAEDSQEYILNLIDTPGHVDFSYEVSRSLQACEGALLVVDASQGVEAQTLANVYLALENNLEIIPVLNKVDLPGADANKIKQEIEEVIGLDTSNAINCSAKTGEGIEDILEAVVSRIPHPQNEIKSPTRALIFDSYYDPYRGVIVYFRVISGSINKRDKILLMASKKHYELDEIGIMAPDEKQVDELHAGEVGYLAASIKSVADARVGDTITLFNSAAKEPLPGYKTANPMVFCGLFPTDADQYPDLRESLEKLQLSDAALKYEPETSSAMGFGFRCGFLGLLHMEIVQERLEREYDLDLIVTAPSVIYKINLNDKEQIFIDNPSTIPDPQSRESIEEPYVKMEIYSPNEFNGTLMGLCQERRGIFVDMKYITTDRVTLIYEIPLAEVVTDFFDQMKSRTQGYASMEYHLIGYRKNDLVRLDVLINSERADPLTSIVHKDKAYGIGRGLVEKLKELIPKQQFKIPIQASIGSRIIASESISALRKDVLSKCYGGDISRKKKLLKKQAKGKKRMKAMGKVDVPQEAFMAVLKLNQ.

Residues 7-196 enclose the tr-type G domain; it reads SKIRNFCIIA…HPQNEIKSPT (190 aa). Residues 19 to 24 and 136 to 139 each bind GTP; these read DHGKST and NKVD.

The protein belongs to the TRAFAC class translation factor GTPase superfamily. Classic translation factor GTPase family. LepA subfamily.

The protein resides in the cell inner membrane. It catalyses the reaction GTP + H2O = GDP + phosphate + H(+). In terms of biological role, required for accurate and efficient protein synthesis under certain stress conditions. May act as a fidelity factor of the translation reaction, by catalyzing a one-codon backward translocation of tRNAs on improperly translocated ribosomes. Back-translocation proceeds from a post-translocation (POST) complex to a pre-translocation (PRE) complex, thus giving elongation factor G a second chance to translocate the tRNAs correctly. Binds to ribosomes in a GTP-dependent manner. The chain is Elongation factor 4 from Prochlorococcus marinus (strain MIT 9515).